The chain runs to 70 residues: Small ribosomal subunit protein bS21 (70 aa).

This sequence belongs to the bacterial ribosomal protein bS21 family.

In Nitrosospira multiformis (strain ATCC 25196 / NCIMB 11849 / C 71), this protein is Small ribosomal subunit protein bS21.